The chain runs to 143 residues: Large ribosomal subunit protein uL11 (143 aa).

It belongs to the universal ribosomal protein uL11 family. In terms of assembly, part of the ribosomal stalk of the 50S ribosomal subunit. Interacts with L10 and the large rRNA to form the base of the stalk. L10 forms an elongated spine to which L12 dimers bind in a sequential fashion forming a multimeric L10(L12)X complex. One or more lysine residues are methylated.

Functionally, forms part of the ribosomal stalk which helps the ribosome interact with GTP-bound translation factors. The sequence is that of Large ribosomal subunit protein uL11 from Methylibium petroleiphilum (strain ATCC BAA-1232 / LMG 22953 / PM1).